The primary structure comprises 213 residues: A-type ATP synthase subunit D (213 aa).

It belongs to the V-ATPase D subunit family. As to quaternary structure, has multiple subunits with at least A(3), B(3), C, D, E, F, H, I and proteolipid K(x).

It is found in the cell membrane. Functionally, component of the A-type ATP synthase that produces ATP from ADP in the presence of a proton gradient across the membrane. The chain is A-type ATP synthase subunit D from Saccharolobus islandicus (strain L.S.2.15 / Lassen #1) (Sulfolobus islandicus).